Consider the following 272-residue polypeptide: HMP-PP phosphatase (272 aa).

Asp8 (nucleophile) is an active-site residue. Residues Asp8, Asp10, and Asp212 each coordinate Mg(2+).

It belongs to the HAD-like hydrolase superfamily. Cof family. Mg(2+) is required as a cofactor.

The catalysed reaction is 4-amino-2-methyl-5-(diphosphooxymethyl)pyrimidine + H2O = 4-amino-2-methyl-5-(phosphooxymethyl)pyrimidine + phosphate + H(+). Its function is as follows. Catalyzes the hydrolysis of 4-amino-2-methyl-5-hydroxymethylpyrimidine pyrophosphate (HMP-PP) to 4-amino-2-methyl-5-hydroxymethylpyrimidine phosphate (HMP-P). The chain is HMP-PP phosphatase from Escherichia fergusonii (strain ATCC 35469 / DSM 13698 / CCUG 18766 / IAM 14443 / JCM 21226 / LMG 7866 / NBRC 102419 / NCTC 12128 / CDC 0568-73).